The chain runs to 498 residues: Death-associated inhibitor of apoptosis 2 (498 aa).

BIR repeat units follow at residues 12–77 (RLAT…SMVL), 116–180 (RLVT…PRVQ), and 215–280 (RLRT…QFVL). Zn(2+) contacts are provided by C249, C252, H269, and C276. Residues 451 to 486 (CKVCLDEEVGVVFLPCGHLATCNQCAPSVANCPMCR) form an RING-type zinc finger.

Belongs to the IAP family. As to quaternary structure, interacts with the caspase Strica. Interacts (via BIR2 domain) with rpr and grim. Interacts (via the BIR2 and BIR3 domains) with hid. Interacts (via BIR3 domain) with Drice. Interacts with Dredd; likely to bind Dredd simultaneously with Fadd to form a trimeric complex. In terms of processing, caspase-dependent cleavage is required for suppression of Drice-mediated cell death. Expressed in both principal and stellar cells of the Malphigian tubules.

The protein localises to the nucleus. It is found in the cytoplasm. Functionally, required for activation of NF-kappaB transcription factors in the immune deficiency (Imd) signaling cascade which is essential for innate immune responses upon infection by Gram-negative bacteria. Promotes cytoplasmic cleavage of Rel and its translocation to the nucleus where it drives expression of antimicrobial peptides. Binds, polyubiquitinates and activates Dredd which is required for Rel-mediated induction of antimicrobial peptides. Anti-apoptotic protein which binds, ubiquitinates and inactivates the effector caspase Drice. Suppresses rpr and hid-dependent cell death in the eye. However, has also been shown to have little, if any, role in the regulation of the canonical caspase-dependent apoptosis pathway. Plays a role in regulating the expression of ion channels. In Drosophila melanogaster (Fruit fly), this protein is Death-associated inhibitor of apoptosis 2 (Diap2).